The chain runs to 211 residues: Uracil phosphoribosyltransferase (211 aa).

5-phospho-alpha-D-ribose 1-diphosphate-binding positions include Arg-77, Arg-102, and 129 to 137 (DPMLATGGS). Uracil is bound by residues Ile-192 and 197-199 (GDA). Asp-198 contacts 5-phospho-alpha-D-ribose 1-diphosphate.

It belongs to the UPRTase family. Requires Mg(2+) as cofactor.

It catalyses the reaction UMP + diphosphate = 5-phospho-alpha-D-ribose 1-diphosphate + uracil. It participates in pyrimidine metabolism; UMP biosynthesis via salvage pathway; UMP from uracil: step 1/1. With respect to regulation, allosterically activated by GTP. Its function is as follows. Catalyzes the conversion of uracil and 5-phospho-alpha-D-ribose 1-diphosphate (PRPP) to UMP and diphosphate. This is Uracil phosphoribosyltransferase from Corynebacterium efficiens (strain DSM 44549 / YS-314 / AJ 12310 / JCM 11189 / NBRC 100395).